The sequence spans 420 residues: Adenylosuccinate synthetase (420 aa).

Residues G11–K17 and G39–T41 each bind GTP. D12 (proton acceptor) is an active-site residue. 2 residues coordinate Mg(2+): D12 and G39. IMP-binding positions include D12 to K15, N37 to H40, T129, R143, N218, T233, and R297. The active-site Proton donor is H40. Residue V293–R299 coordinates substrate. GTP contacts are provided by residues R299, K325–D327, and G407–G409.

It belongs to the adenylosuccinate synthetase family. As to quaternary structure, homodimer. Mg(2+) serves as cofactor.

The protein localises to the cytoplasm. The catalysed reaction is IMP + L-aspartate + GTP = N(6)-(1,2-dicarboxyethyl)-AMP + GDP + phosphate + 2 H(+). Its pathway is purine metabolism; AMP biosynthesis via de novo pathway; AMP from IMP: step 1/2. Plays an important role in the de novo pathway and in the salvage pathway of purine nucleotide biosynthesis. Catalyzes the first committed step in the biosynthesis of AMP from IMP. This chain is Adenylosuccinate synthetase, found in Uncinocarpus reesii (strain UAMH 1704).